We begin with the raw amino-acid sequence, 537 residues long: ATP synthase subunit alpha (537 aa).

An ATP-binding site is contributed by 171–178 (GDRQTGKT).

This sequence belongs to the ATPase alpha/beta chains family. As to quaternary structure, F-type ATPases have 2 components, CF(1) - the catalytic core - and CF(0) - the membrane proton channel. CF(1) has five subunits: alpha(3), beta(3), gamma(1), delta(1), epsilon(1). CF(0) has four main subunits: a, b, b' and c.

The protein resides in the cell inner membrane. It catalyses the reaction ATP + H2O + 4 H(+)(in) = ADP + phosphate + 5 H(+)(out). Functionally, produces ATP from ADP in the presence of a proton gradient across the membrane. The alpha chain is a regulatory subunit. The sequence is that of ATP synthase subunit alpha from Chloroherpeton thalassium (strain ATCC 35110 / GB-78).